The sequence spans 288 residues: MCTLANRSFAKMNGIGNEIVVLDLRDDPVAVTAAAARAIASQVPYDQLMVLQPPRAAGTAAFIRIYNNDGSESNACGNGMRCVAKQVFSGTDASALAFESRAGLLQCWRGAAPDIYTVDMGVPKFGWQDIPLAEEFRDTRMIELQIGPIDAPLLHTPSAVSMGNPHAIFWVDDVHAHDLGRFGPLLENHPIFPERANITLAHIVDRTHIVIRTWERGVGLTKACGSAACATAVAAVRLKRAERQVQISLPGGDLTIDWREADDHVLMTGGASFEFEGTLDPALFAGAA.

Residues N17, Q47, and N67 each contribute to the substrate site. Catalysis depends on C76, which acts as the Proton donor. Substrate contacts are provided by residues G77–N78, N164, N197, and E215–R216. C224 (proton acceptor) is an active-site residue. A substrate-binding site is contributed by G225 to S226.

It belongs to the diaminopimelate epimerase family. Homodimer.

The protein resides in the cytoplasm. The catalysed reaction is (2S,6S)-2,6-diaminopimelate = meso-2,6-diaminopimelate. Its pathway is amino-acid biosynthesis; L-lysine biosynthesis via DAP pathway; DL-2,6-diaminopimelate from LL-2,6-diaminopimelate: step 1/1. Functionally, catalyzes the stereoinversion of LL-2,6-diaminopimelate (L,L-DAP) to meso-diaminopimelate (meso-DAP), a precursor of L-lysine and an essential component of the bacterial peptidoglycan. This chain is Diaminopimelate epimerase, found in Rhodopseudomonas palustris (strain BisA53).